The following is a 403-amino-acid chain: S-adenosylmethionine synthase (403 aa).

An ATP-binding site is contributed by His-17. Residue Asp-19 participates in Mg(2+) binding. K(+) is bound at residue Glu-45. L-methionine is bound by residues Glu-58 and Gln-104. The segment at 104–114 is flexible loop; the sequence is QSPDIAQGVDT. ATP-binding positions include 179-181, 250-251, Asp-259, 265-266, Ala-282, and Lys-286; these read DGK, KF, and RK. Asp-259 is a binding site for L-methionine. Position 290 (Lys-290) interacts with L-methionine.

This sequence belongs to the AdoMet synthase family. Homotetramer; dimer of dimers. Mg(2+) serves as cofactor. The cofactor is K(+).

It localises to the cytoplasm. It carries out the reaction L-methionine + ATP + H2O = S-adenosyl-L-methionine + phosphate + diphosphate. The protein operates within amino-acid biosynthesis; S-adenosyl-L-methionine biosynthesis; S-adenosyl-L-methionine from L-methionine: step 1/1. Functionally, catalyzes the formation of S-adenosylmethionine (AdoMet) from methionine and ATP. The overall synthetic reaction is composed of two sequential steps, AdoMet formation and the subsequent tripolyphosphate hydrolysis which occurs prior to release of AdoMet from the enzyme. This Mycolicibacterium paratuberculosis (strain ATCC BAA-968 / K-10) (Mycobacterium paratuberculosis) protein is S-adenosylmethionine synthase.